The sequence spans 145 residues: Allergen MAG29 (145 aa).

2 disordered regions span residues 1 to 21 (KDDI…DDKQ) and 103 to 145 (AGGA…EEVD). Gly residues predominate over residues 104–137 (GGAGAGGMPGGFPGGFPGTDGSGGGAAGGDGGKS).

Belongs to the heat shock protein 70 family.

The protein is Allergen MAG29 (MAG29) of Dermatophagoides farinae (American house dust mite).